The sequence spans 400 residues: Acetate kinase (400 aa).

Asparagine 10 is a Mg(2+) binding site. Lysine 17 contributes to the ATP binding site. Substrate is bound at residue arginine 91. Residue aspartate 150 is the Proton donor/acceptor of the active site. ATP-binding positions include 210 to 214 (HLGNG), 285 to 287 (DCR), and 333 to 337 (GIGEN). Glutamate 387 contacts Mg(2+).

The protein belongs to the acetokinase family. Homodimer. Mg(2+) is required as a cofactor. The cofactor is Mn(2+).

The protein resides in the cytoplasm. It carries out the reaction acetate + ATP = acetyl phosphate + ADP. Its pathway is metabolic intermediate biosynthesis; acetyl-CoA biosynthesis; acetyl-CoA from acetate: step 1/2. Functionally, catalyzes the formation of acetyl phosphate from acetate and ATP. Can also catalyze the reverse reaction. The sequence is that of Acetate kinase from Yersinia pseudotuberculosis serotype I (strain IP32953).